A 208-amino-acid polypeptide reads, in one-letter code: Large ribosomal subunit protein bL25 (208 aa).

It belongs to the bacterial ribosomal protein bL25 family. CTC subfamily. Part of the 50S ribosomal subunit; part of the 5S rRNA/L5/L18/L25 subcomplex. Contacts the 5S rRNA. Binds to the 5S rRNA independently of L5 and L18.

This is one of the proteins that binds to the 5S RNA in the ribosome where it forms part of the central protuberance. This is Large ribosomal subunit protein bL25 from Burkholderia thailandensis (strain ATCC 700388 / DSM 13276 / CCUG 48851 / CIP 106301 / E264).